A 5099-amino-acid chain; its full sequence is Malformin synthetase mlfA (5099 aa).

Residues Q224–L615 form an adenylation 1 region. The region spanning T756 to D829 is the Carrier 1 domain. Position 790 is an O-(pantetheine 4'-phosphoryl)serine (S790). Residues E867–P1297 are condensation 1. The tract at residues D1325–R1717 is adenylation 2. A Carrier 2 domain is found at A1857–A1934. S1894 is modified (O-(pantetheine 4'-phosphoryl)serine). Residues M1995–L2040 form a disordered region. The span at S1999 to P2017 shows a compositional bias: low complexity. Residues E2067–L2482 are condensation 2. Residues L2505–L2897 form an adenylation 3 region. The region spanning R3032–S3108 is the Carrier 3 domain. S3069 carries the post-translational modification O-(pantetheine 4'-phosphoryl)serine. Condensation stretches follow at residues W3125–Q3589 and D3610–M4033. The tract at residues Y4058–F4446 is adenylation 4. A Carrier 4 domain is found at P4581–V4657. At S4618 the chain carries O-(pantetheine 4'-phosphoryl)serine. A condensation 5 region spans residues D4696–V5017.

Belongs to the NRP synthetase family.

Its pathway is secondary metabolite biosynthesis. Its function is as follows. Nonribosomal peptide synthetase; part of the gene cluster that mediates the biosynthesis of malformins, cyclic pentapeptides with a disulfide bond between 2 consecutive cysteins, that show potential anti-tumor as well as antimalarial and antitrypanosomal properties. The nonribosomal peptide synthetase mlfA is responsible of the formation of the cyclic pentapeptide. The malformin biosynthesis clusters in malformin-producing fungi also contain enzymes involved in the formation of the disulfide bond between the two consecutive cysteins within malformins, in addition to additional tailoring enzymes such as methyltransferases or oxidoreductases. They are also composed of up to 4 major facilitator superfamily transporters, and transcription factors probably involved in the regulation of the expression of those clusters. The sequence is that of Malformin synthetase mlfA from Aspergillus sclerotiicarbonarius (strain CBS 121057 / IBT 28362).